Here is a 406-residue protein sequence, read N- to C-terminus: Putative phosphate permease PH0640 (406 aa).

A run of 11 helical transmembrane segments spans residues 2–22, 45–65, 83–103, 114–134, 140–160, 182–202, 207–227, 265–285, 288–308, 330–350, and 385–405; these read IPID…AWAI, AVLI…KTVT, VLIY…IIAT, SIIG…IVNW, VVLS…LVFR, FWIG…VLHG, IGIL…TSML, VANA…GLAG, VPVP…GVAT, FTID…GMPI, and FVTV…LLLI.

The protein belongs to the inorganic phosphate transporter (PiT) (TC 2.A.20) family.

The protein localises to the cell membrane. Functionally, potential transporter for phosphate. This is Putative phosphate permease PH0640 from Pyrococcus horikoshii (strain ATCC 700860 / DSM 12428 / JCM 9974 / NBRC 100139 / OT-3).